The sequence spans 143 residues: Class II hydrophobin qid3 (143 aa).

A signal peptide spans M1–A17. A compositionally biased stretch (pro residues) spans N20–T37. Residues N20 to N67 are disordered. A run of 10 repeats spans residues N41 to G42, N43 to G44, N47 to G48, N49 to G50, N51 to G52, N53 to G54, N55 to G56, N59 to G60, N61 to G62, and N63 to G64. The tract at residues N41–G64 is 10 X 2 AA repeats of N-G. A compositionally biased stretch (gly residues) spans G42–N63. Cystine bridges form between C74–C124, C85–C97, and C125–C136.

The protein belongs to the cerato-ulmin hydrophobin family. In terms of assembly, homotetramer. Further self-assembles to form highly ordered films at water-air interfaces through intermolecular interactions.

It is found in the secreted. The protein resides in the cell wall. Its function is as follows. Aerial growth, conidiation, and dispersal of filamentous fungi in the environment rely upon a capability of their secreting small amphipathic proteins called hydrophobins (HPBs) with low sequence identity. Class I can self-assemble into an outermost layer of rodlet bundles on aerial cell surfaces, conferring cellular hydrophobicity that supports fungal growth, development and dispersal; whereas Class II form highly ordered films at water-air interfaces through intermolecular interactions but contribute nothing to the rodlet structure. Qid3 is a class II hydrophobin that might acts as a chitinase inhibitor at the cell surface that blocks the degradation of the chitin rings localized in the budding region of dividing cells. In Trichoderma harzianum (Hypocrea lixii), this protein is Class II hydrophobin qid3.